The sequence spans 354 residues: UDP-N-acetylglucosamine--N-acetylmuramyl-(pentapeptide) pyrophosphoryl-undecaprenol N-acetylglucosamine transferase (354 aa).

Residues 12–14 (TGG), Asn-124, Arg-163, Ser-187, Ile-240, and Gln-285 contribute to the UDP-N-acetyl-alpha-D-glucosamine site.

The protein belongs to the glycosyltransferase 28 family. MurG subfamily.

Its subcellular location is the cell inner membrane. It carries out the reaction di-trans,octa-cis-undecaprenyl diphospho-N-acetyl-alpha-D-muramoyl-L-alanyl-D-glutamyl-meso-2,6-diaminopimeloyl-D-alanyl-D-alanine + UDP-N-acetyl-alpha-D-glucosamine = di-trans,octa-cis-undecaprenyl diphospho-[N-acetyl-alpha-D-glucosaminyl-(1-&gt;4)]-N-acetyl-alpha-D-muramoyl-L-alanyl-D-glutamyl-meso-2,6-diaminopimeloyl-D-alanyl-D-alanine + UDP + H(+). It functions in the pathway cell wall biogenesis; peptidoglycan biosynthesis. Its function is as follows. Cell wall formation. Catalyzes the transfer of a GlcNAc subunit on undecaprenyl-pyrophosphoryl-MurNAc-pentapeptide (lipid intermediate I) to form undecaprenyl-pyrophosphoryl-MurNAc-(pentapeptide)GlcNAc (lipid intermediate II). The polypeptide is UDP-N-acetylglucosamine--N-acetylmuramyl-(pentapeptide) pyrophosphoryl-undecaprenol N-acetylglucosamine transferase (Methylococcus capsulatus (strain ATCC 33009 / NCIMB 11132 / Bath)).